The following is a 582-amino-acid chain: DNA mismatch repair protein MutL (582 aa).

It belongs to the DNA mismatch repair MutL/HexB family.

In terms of biological role, this protein is involved in the repair of mismatches in DNA. It is required for dam-dependent methyl-directed DNA mismatch repair. May act as a 'molecular matchmaker', a protein that promotes the formation of a stable complex between two or more DNA-binding proteins in an ATP-dependent manner without itself being part of a final effector complex. In Buchnera aphidicola subsp. Schizaphis graminum (strain Sg), this protein is DNA mismatch repair protein MutL.